The primary structure comprises 333 residues: Pro-cathepsin H (333 aa).

The signal sequence occupies residues 1–20; that stretch reads MWAALPLLCAGAWLLSTGAT. Residues 21-95 constitute a propeptide, activation peptide; the sequence is AELTVNAIEK…AEIKHKFLWS (75 aa). Residues N70 and N99 are each glycosylated (N-linked (GlcNAc...) asparagine). Intrachain disulfides connect C100-C325, C136-C179, C170-C212, and C270-C320. Positions 104–113 are excised as a propeptide; the sequence is KSNYLRGTGP. The active site involves C139. N228 carries N-linked (GlcNAc...) asparagine glycosylation. Catalysis depends on residues H279 and N299.

This sequence belongs to the peptidase C1 family. In terms of assembly, composed of a mini chain and a large chain. The large chain may be split into heavy and light chain. All chains are held together by disulfide bonds. In terms of tissue distribution, widely expressed with highest expression found in non-skeletal tissues. Low levels found in skeletal tissue.

Its subcellular location is the lysosome. The enzyme catalyses Hydrolysis of proteins, acting as an aminopeptidase (notably, cleaving Arg-|-Xaa bonds) as well as an endopeptidase.. Functionally, important for the overall degradation of proteins in lysosomes. The polypeptide is Pro-cathepsin H (Ctsh) (Mus musculus (Mouse)).